The sequence spans 1526 residues: Probable autotransporter YpjA (1526 aa).

The N-terminal stretch at 1–29 (MNRTSPYYCRRSVLSLLISALIYAPPGMA) is a signal peptide. A disordered region spans residues 1173–1223 (NSNWNLTNDVKPNPDPIPNPKPDPKPDPKPDPNPKPDPTPDPTPTPVPEKR). Basic and acidic residues predominate over residues 1194–1206 (PDPKPDPKPDPNP). The segment covering 1207–1219 (KPDPTPDPTPTPV) has biased composition (pro residues). The Autotransporter domain maps to 1258–1526 (ASPHNNNVWG…NAVAGVNWSF (269 aa)).

The protein resides in the cell outer membrane. Functionally, upon overexpression shows increased adherence to polyvinyl chloride (PVC) plates, increased mature biofilm formation. The sequence is that of Probable autotransporter YpjA (ypjA) from Escherichia coli (strain K12).